The chain runs to 218 residues: Large ribosomal subunit protein uL3 (218 aa).

Positions histidine 126–glycine 163 are disordered.

This sequence belongs to the universal ribosomal protein uL3 family. As to quaternary structure, part of the 50S ribosomal subunit. Forms a cluster with proteins L14 and L19.

One of the primary rRNA binding proteins, it binds directly near the 3'-end of the 23S rRNA, where it nucleates assembly of the 50S subunit. The polypeptide is Large ribosomal subunit protein uL3 (Synechococcus sp. (strain CC9311)).